The chain runs to 584 residues: MNFFMDIRDKVFAATGKVKADTIFFGGLLINVNTKEMLYRDIAVKEGYIVGIGDVSSLKGDETEMIDVTGKHLCPGLMDGHVHFESSMVTLSQFAVPALAHGTTSVVIDPHEIANVLGRGGIELVLDEAATLPLNAFVAVSSCVPATSFETAGASIDVDDIVSLIANENVVGLGEMMDYPGVVFCDETKLSMIRTALKERLVVDGHCPALSREQLFGYMCAGISTDHESIEYEEALEKLRLGMKLMIREGSAAKALDKFLPRLIGDGVSLENVFFVTDDKHPSDLLKGYMDVIVRRAIELGLSPLDAISMCTINAAKHYRVDHIVGSLSMGRKADIIVLEDLEKFIIDSVYASGRPVESFVPSYEYPDTVFNTVKFDAVTATDLQIMSDADKDHRVRVIKVVPDLIVTENETFVLHSDRHGILMPDVENDVLSVAVIERHGKNGNIGTGFIKGMGLRNGAIGQSIGHDSHNVVVTGVDHSDMALCANTIRSMNGGICVVSNGKVVEQLELPFAGLLSTLPAEEVEKKLTDLHKAVKEIGCALPAPFITHSFIALPVIPSLRLTDMGLFDVDKFSLVSPIDEVME.

This sequence belongs to the metallo-dependent hydrolases superfamily. Adenine deaminase family. It depends on Mn(2+) as a cofactor.

The catalysed reaction is adenine + H2O + H(+) = hypoxanthine + NH4(+). The sequence is that of Adenine deaminase from Methanococcoides burtonii (strain DSM 6242 / NBRC 107633 / OCM 468 / ACE-M).